Reading from the N-terminus, the 576-residue chain is MSVACTIRRHIIEKLHVLNIDNFVVTNESILAKLIVDYPNNPDHGDLYTNAALILSKYIKKNPMDIAKILVDEFSSIKEISDINVVKPGFINFNISLDVWYEIIISINRLKEKFGHVNFGNGKRVNIEFVSANPTGPMHIGHARGAIFGDVLANLLERVGYEVVREYYINDAGAQVDVLVESVYLRYKEVLGENIVIGSGLYPGLYLKDIGKLLYQEYGSGLLGMDYSQRRRIIRDVSLMYLMKLIKEDLALLGIKHDIFTSESQLQKDNIVQKCVELLQEKQLIYYGTLDQPKGTEGINWKPRTQMLFKSTDFGDDVDRALQKADGSWTYFANDIAYHFYKISRGFQHMILELGSDHIGYVKRLKAAVKALSDGNATIDIKLHSIVNFLDNGAQVKMSKRSGEFLTIKDVIEKVGKDVVRFIMLTRKSDVVLDFDFAKVVEQSKNNPVFYVQYAHARVHSLIRNAPKILEIELVDFSVLSSKEEILLIKLLAKWQDIVEISAKTAEPHRITFYLIEVAEAFHALWGYGNKSTDMRFIVDNNINLTSARIYLAKSVGYVIASGLTIFSIVPLTEMK.

The 'HIGH' region motif lies at 132–142 (ANPTGPMHIGH).

It belongs to the class-I aminoacyl-tRNA synthetase family. In terms of assembly, monomer.

Its subcellular location is the cytoplasm. The catalysed reaction is tRNA(Arg) + L-arginine + ATP = L-arginyl-tRNA(Arg) + AMP + diphosphate. This Ehrlichia ruminantium (strain Gardel) protein is Arginine--tRNA ligase.